Here is a 366-residue protein sequence, read N- to C-terminus: Aminomethyltransferase (366 aa).

It belongs to the GcvT family. In terms of assembly, the glycine cleavage system is composed of four proteins: P, T, L and H.

The enzyme catalyses N(6)-[(R)-S(8)-aminomethyldihydrolipoyl]-L-lysyl-[protein] + (6S)-5,6,7,8-tetrahydrofolate = N(6)-[(R)-dihydrolipoyl]-L-lysyl-[protein] + (6R)-5,10-methylene-5,6,7,8-tetrahydrofolate + NH4(+). The glycine cleavage system catalyzes the degradation of glycine. The protein is Aminomethyltransferase of Chlorobium chlorochromatii (strain CaD3).